We begin with the raw amino-acid sequence, 203 residues long: Histone deacetylase HDT4 (203 aa).

The tract at residues Glu-2 to Gly-5 is required to repress transcription. Residues Ala-121–Lys-203 are disordered. Residues Asn-129–Ala-157 show a composition bias toward acidic residues. Residues Gly-180–Cys-193 are compositionally biased toward basic residues.

It belongs to the histone deacetylase HD2 family. As to expression, confined to stems and flowers with young siliques.

It is found in the nucleus. It localises to the nucleolus. Functionally, probably mediates the deacetylation of lysine residues lysine residues on the N-terminal part of the core histones (H2A, H2B, H3 and H4). Histone deacetylation gives a tag for epigenetic repression and plays an important role in transcriptional regulation, cell cycle progression and developmental events. The polypeptide is Histone deacetylase HDT4 (HDT4) (Arabidopsis thaliana (Mouse-ear cress)).